The sequence spans 371 residues: Queuine tRNA-ribosyltransferase (371 aa).

Catalysis depends on Asp90, which acts as the Proton acceptor. Substrate contacts are provided by residues 90–94, Asp144, Gln188, and Gly215; that span reads DSGGF. The tract at residues 246 to 252 is RNA binding; the sequence is GVGTPED. Asp265 serves as the catalytic Nucleophile. Residues 270-274 form an RNA binding; important for wobble base 34 recognition region; the sequence is TRNAR. 4 residues coordinate Zn(2+): Cys303, Cys305, Cys308, and His334.

The protein belongs to the queuine tRNA-ribosyltransferase family. As to quaternary structure, homodimer. Within each dimer, one monomer is responsible for RNA recognition and catalysis, while the other monomer binds to the replacement base PreQ1. Zn(2+) is required as a cofactor.

The enzyme catalyses 7-aminomethyl-7-carbaguanine + guanosine(34) in tRNA = 7-aminomethyl-7-carbaguanosine(34) in tRNA + guanine. Its pathway is tRNA modification; tRNA-queuosine biosynthesis. Its function is as follows. Catalyzes the base-exchange of a guanine (G) residue with the queuine precursor 7-aminomethyl-7-deazaguanine (PreQ1) at position 34 (anticodon wobble position) in tRNAs with GU(N) anticodons (tRNA-Asp, -Asn, -His and -Tyr). Catalysis occurs through a double-displacement mechanism. The nucleophile active site attacks the C1' of nucleotide 34 to detach the guanine base from the RNA, forming a covalent enzyme-RNA intermediate. The proton acceptor active site deprotonates the incoming PreQ1, allowing a nucleophilic attack on the C1' of the ribose to form the product. After dissociation, two additional enzymatic reactions on the tRNA convert PreQ1 to queuine (Q), resulting in the hypermodified nucleoside queuosine (7-(((4,5-cis-dihydroxy-2-cyclopenten-1-yl)amino)methyl)-7-deazaguanosine). This Neisseria meningitidis serogroup A / serotype 4A (strain DSM 15465 / Z2491) protein is Queuine tRNA-ribosyltransferase.